A 678-amino-acid polypeptide reads, in one-letter code: MDILIFVTAAAHLVYTPFTKVEESFNLQAMHDILYLRNNFTQYDHHDYPGVVPRTFIGPLVVSIISAPFVLLFETLSINKFWAQYVVRLVLAGAISVAWNSLRQAVTKIYGVEVRLWFTAITITQFHFMFYMTRPLPNIFALPIVLFAIAYWLRDQHKPFIICSGISILVFRSELALFLGILLVVSLLRRKVSIDGLLKVALPAGVCILAATVLVDSFFWRRLLWPEGEVLWYNTVLNKSSNWGTSPFLWYFYSALPRAMGASLVLVPIGVALEPRIRPLVLSALLFVLLYSILPHKELRFIIYVFPVLNIAAACACQRIWMNSAKSTWHSFLALACGAHLLLNVFITLFLLVISGTNYPGGAALSRLHRLEAGTSNVSVHISNLAAQSGVSRFMEINNEWTYSKDETMNYTQADLVAYTHLLVEAKNKQNTELWASLQNEFDTLEFIDCFNSIGIQYNSLLPVRIKTKPCIGILKKRPVAPKEASKTKEKIAKTKTYPVEKETLLAPVKEFPKVIGDPKMKSRLQVDADDDDGIVSTVEEMSLELETDTEPHAGAETIETPLKEINFQELRTLALGQATKKSRAATKMKIRQIIEQHYRAKGKQIENDSAETQKTQGKAGLRQSVKSIIKQEKIKEMIEQIATMDLTRICDLERTSTKDCLKQVIDKIDDSEGLKSK.

11 helical membrane-spanning segments follow: residues 1 to 21, 56 to 76, 81 to 101, 109 to 129, 133 to 153, 168 to 188, 200 to 220, 252 to 272, 279 to 299, 301 to 321, and 334 to 354; these read MDILIFVTAAAHLVYTPFTKV, FIGPLVVSIISAPFVLLFETL, FWAQYVVRLVLAGAISVAWNS, IYGVEVRLWFTAITITQFHFM, TRPLPNIFALPIVLFAIAYWL, ILVFRSELALFLGILLVVSLL, VALPAGVCILAATVLVDSFFW, FYSALPRAMGASLVLVPIGVA, PLVLSALLFVLLYSILPHKEL, FIIYVFPVLNIAAACACQRIW, and ALACGAHLLLNVFITLFLLVI.

Belongs to the glycosyltransferase 22 family.

The protein localises to the endoplasmic reticulum membrane. The enzyme catalyses an alpha-D-Man-(1-&gt;2)-alpha-D-Man-(1-&gt;2)-alpha-D-Man-(1-&gt;3)-[alpha-D-Man-(1-&gt;2)-alpha-D-Man-(1-&gt;3)-alpha-D-Man-(1-&gt;6)]-beta-D-Man-(1-&gt;4)-beta-D-GlcNAc-(1-&gt;4)-alpha-D-GlcNAc-diphospho-di-trans,poly-cis-dolichol + a di-trans,poly-cis-dolichyl beta-D-mannosyl phosphate = an alpha-D-Man-(1-&gt;2)-alpha-D-Man-(1-&gt;2)-alpha-D-Man-(1-&gt;3)-[alpha-D-Man-(1-&gt;2)-alpha-D-Man-(1-&gt;3)-[alpha-D-Man-(1-&gt;6)]-alpha-D-Man-(1-&gt;6)]-beta-D-Man-(1-&gt;4)-beta-D-GlcNAc-(1-&gt;4)-alpha-D-GlcNAc-diphospho-di-trans,poly-cis-dolichol + a di-trans,poly-cis-dolichyl phosphate + H(+). It participates in protein modification; protein glycosylation. Mannosyltransferase that operates in the biosynthetic pathway of dolichol-linked oligosaccharides, the glycan precursors employed in protein asparagine (N)-glycosylation. The assembly of dolichol-linked oligosaccharides begins on the cytosolic side of the endoplasmic reticulum membrane and finishes in its lumen. The sequential addition of sugars to dolichol pyrophosphate produces dolichol-linked oligosaccharides containing fourteen sugars, including two GlcNAcs, nine mannoses and three glucoses. Once assembled, the oligosaccharide is transferred from the lipid to nascent proteins by oligosaccharyltransferases. In the lumen of the endoplasmic reticulum, adds the eighth mannose residue in an alpha-1,6 linkage onto Man(7)GlcNAc(2)-PP-dolichol to produce Man(8)GlcNAc(2)-PP-dolichol. The chain is Dol-P-Man:Man(7)GlcNAc(2)-PP-Dol alpha-1,6-mannosyltransferase from Drosophila melanogaster (Fruit fly).